A 611-amino-acid polypeptide reads, in one-letter code: Dehydrogenase pkfF (611 aa).

A signal peptide spans 1-19 (MRHTALLPLVSSFIVPALA). Asparagine 28 and asparagine 38 each carry an N-linked (GlcNAc...) asparagine glycan. FAD is bound by residues 50 to 51 (TS), 71 to 72 (EA), and 137 to 140 (HYMV). 6 N-linked (GlcNAc...) asparagine glycosylation sites follow: asparagine 180, asparagine 187, asparagine 240, asparagine 272, asparagine 409, and asparagine 471. The active-site Proton acceptor is the histidine 547. FAD contacts are provided by residues alanine 581 and 592 to 593 (PQ).

Belongs to the GMC oxidoreductase family. It depends on FAD as a cofactor.

The protein operates within secondary metabolite biosynthesis. Its function is as follows. Dehydrogenase; part of the gene cluster that mediates the biosynthesis of aspernidine A, a prenylated isoindolinone. The starting point of the biosynthesis of aspernidin A is the production of orsellinaldehyde by the non-reducing polyketide synthase pkfA. Hydroxylation, methylation of one of the phenol groups, and prenylation, presumably catalyzed by the prenyltransferase pkfE, would be needed to yield aspernidine D. Subsequently, the cytochrome P450 monooxygenase pkfB is responsible for hydroxylation of aspernidine D to yield aspernidine E. The dehydrogenase pkfF may be responsible for further oxidation of aspernidine E to form a dialdehyde intermediate which is further transformed in a series of steps, some of which are enzyme-mediated, to generate aspernidine A. The possibility that additional enzymes outside of the cluster are involved in aspernidine A biosynthesis cannot be excluded. The protein is Dehydrogenase pkfF of Emericella nidulans (strain FGSC A4 / ATCC 38163 / CBS 112.46 / NRRL 194 / M139) (Aspergillus nidulans).